The primary structure comprises 150 residues: Large ribosomal subunit protein uL15 (150 aa).

It belongs to the universal ribosomal protein uL15 family. In terms of assembly, part of the 50S ribosomal subunit.

In terms of biological role, binds to the 23S rRNA. This chain is Large ribosomal subunit protein uL15, found in Rickettsia typhi (strain ATCC VR-144 / Wilmington).